Consider the following 348-residue polypeptide: Killer cell immunoglobulin-like receptor 2DL1 (348 aa).

A signal peptide spans 1–21; that stretch reads MSLLVVSMACVGFFLLQGAWP. At 22–245 the chain is on the extracellular side; the sequence is HEGVHRKPSL…SKTGNPRHLH (224 aa). 2 consecutive Ig-like C2-type domains span residues 42 to 107 and 142 to 205; these read EETV…VTHS and GENV…FHDS. Cys49 and Cys100 are oxidised to a cystine. Asn67, Asn84, Asn144, and Asn178 each carry an N-linked (GlcNAc...) asparagine glycan. A disulfide bond links Cys149 and Cys198. The segment at 220–239 is disordered; that stretch reads VTGNPSNSWPSPTEPSSKTG. A helical transmembrane segment spans residues 246–264; the sequence is ILIGTSVVIILFILLFFLL. Residues 265–348 lie on the Cytoplasmic side of the membrane; that stretch reads HRWCSNKKNA…ESRSKVVSCP (84 aa).

It belongs to the immunoglobulin superfamily. In terms of assembly, interacts with ARRB2. Interacts with PTPN6; the interaction is enhanced by ARRB2. Interacts with PTPN11; the interaction is enhanced by ARRB2. In terms of tissue distribution, expressed by NK cells.

It is found in the cell membrane. Its function is as follows. Receptor on natural killer (NK) cells for some HLA-C alleles such as w4 and w6. Inhibits the activity of NK cells thus preventing cell lysis. In Homo sapiens (Human), this protein is Killer cell immunoglobulin-like receptor 2DL1.